The following is a 495-amino-acid chain: Muscle LIM protein Mlp84B (495 aa).

Residues 12–63 (CPRCGKSVYAAEERLAGGYVFHKNCFKCGMCNKSLDSTNCTEHERELYCKTC) enclose the LIM zinc-binding 1 domain. The short motif at 66–71 (RKFGPK) is the Nuclear localization signal element. Positions 120-172 (CPRCGGYVYAAEQMLARGRSWHKECFKCGTCKKGLDSILCCEAPDKNIYCKGC) constitute an LIM zinc-binding 2 domain. A Nuclear localization signal motif is present at residues 175–180 (KKFGPK). LIM zinc-binding domains are found at residues 222-274 (CPRC…CRTC), 325-377 (CPRC…CRAC), and 421-473 (CPRC…CRAC).

In terms of tissue distribution, in the embryo, expression is restricted to the somatic, visceral, and pharyngeal muscles. Within the somatic musculature, expression is localized at the ends of muscles fibers at the point of attachment to the epidermis (at protein level). There is no expression in cardiac mesoderm or in fat body.

The protein localises to the cytoplasm. Its subcellular location is the nucleus. Its function is as follows. Plays a role in cell differentiation late in myogenesis. Transcription factor Mef2 is essential for expression. The chain is Muscle LIM protein Mlp84B from Drosophila melanogaster (Fruit fly).